The chain runs to 1058 residues: COP1-interacting protein 7 (1058 aa).

Disordered regions lie at residues 123–147, 262–281, and 330–463; these read LGGT…GDTV, HGNS…QEGR, and MGDV…GNDN. 2 stretches are compositionally biased toward polar residues: residues 126–136 and 262–276; these read TWTSQKSTALS and HGNS…SFET. Positions 340-347 match the Nuclear localization signal 1 motif; sequence SKKKKKKK. Over residues 340–353 the composition is skewed to basic residues; sequence SKKKKKKKKNKKKS. The segment covering 403-414 has biased composition (acidic residues); it reads DSDESGEEEGFV. The short motif at 431-438 is the Nuclear localization signal 2 element; the sequence is ERRHKSTS. The segment covering 432 to 446 has biased composition (basic residues); sequence RRHKSTSHRQRKHKS. Positions 447-462 are enriched in basic and acidic residues; that stretch reads HNGDDDSSNKETKGND. A Phosphoserine modification is found at Ser-477. The tract at residues 708 to 887 is disordered; it reads AGEQTLDGKE…KSVELSRDPS (180 aa). Positions 757 to 773 are enriched in basic and acidic residues; it reads SKSEMEEERKKRMEELL. The Nuclear localization signal 3 motif lies at 764–771; sequence ERKKRMEE. The segment covering 783–808 has biased composition (low complexity); that stretch reads KSSGGSVSSSLASKKTPTVTKSVKSS. 2 stretches are compositionally biased toward basic and acidic residues: residues 860-869 and 878-887; these read KTEKAQEKKS and KSVELSRDPS. Ser-915, Ser-986, and Ser-992 each carry phosphoserine. Residues 1020–1041 form a disordered region; sequence STPPATEADHSRKKWNSEETSP. Positions 1026–1040 are enriched in basic and acidic residues; the sequence is EADHSRKKWNSEETS.

As to quaternary structure, interacts with COP1.

Its subcellular location is the nucleus. In terms of biological role, exhibits transcriptional activation activity. Positive regulator of light-regulated genes, probably being a direct downstream target of COP1 for mediating light control of gene expression. In Arabidopsis thaliana (Mouse-ear cress), this protein is COP1-interacting protein 7.